The chain runs to 353 residues: Histidinol-phosphate aminotransferase (353 aa).

Lys-211 carries the post-translational modification N6-(pyridoxal phosphate)lysine.

Belongs to the class-II pyridoxal-phosphate-dependent aminotransferase family. Histidinol-phosphate aminotransferase subfamily. In terms of assembly, homodimer. Pyridoxal 5'-phosphate is required as a cofactor.

The enzyme catalyses L-histidinol phosphate + 2-oxoglutarate = 3-(imidazol-4-yl)-2-oxopropyl phosphate + L-glutamate. It participates in amino-acid biosynthesis; L-histidine biosynthesis; L-histidine from 5-phospho-alpha-D-ribose 1-diphosphate: step 7/9. In Marinomonas sp. (strain MWYL1), this protein is Histidinol-phosphate aminotransferase.